A 412-amino-acid chain; its full sequence is Proline-rich protein 30 (412 aa).

Over residues 33 to 45 the composition is skewed to polar residues; the sequence is HNLQPLSAHQSLR. Disordered stretches follow at residues 33–75, 123–174, and 318–412; these read HNLQ…QFGS, PLTP…SNRQ, and PKEV…KSSV. Low complexity-rich tracts occupy residues 126-142 and 334-350; these read PSFS…PHSP and PSPA…ADPA. Polar residues predominate over residues 353–372; it reads TPSQTRSFRSAGLQSPNSPR.

The polypeptide is Proline-rich protein 30 (PRR30) (Macaca fascicularis (Crab-eating macaque)).